A 128-amino-acid chain; its full sequence is Protein 2B* (128 aa).

2 disordered regions span residues 1–27 (PFMF…NPTA) and 92–128 (RDDN…RNSS). Over residues 18 to 27 (SVINGSNPTA) the composition is skewed to polar residues. Positions 111–128 (IDGRRDYKPDKSVRRNSS) are enriched in basic and acidic residues.

It belongs to the encephalomyocarditis virus protein 2B* family.

The sequence is that of Protein 2B* from Aotus trivirgatus (Three-striped night monkey).